We begin with the raw amino-acid sequence, 270 residues long: uncharacterized protein (270 aa).

The HTH lysR-type domain maps to 1-50; that stretch reads LTEVVKAQSFTKAAENLYTSQPSISRDIKRLENDYDVKVFEFKHSKMTLT. Residues 10–29 constitute a DNA-binding region (H-T-H motif); sequence FTKAAENLYTSQPSISRDIK.

It belongs to the LysR transcriptional regulatory family.

This is an uncharacterized protein from Staphylococcus xylosus.